The chain runs to 313 residues: uncharacterized protein (313 aa).

A run of 3 helical transmembrane segments spans residues 41–61, 68–88, and 102–122; these read LAGT…GLMV, VHSV…FHYF, and QLLL…KLVL.

It belongs to the cytochrome b family.

Its subcellular location is the mitochondrion membrane. This is an uncharacterized protein from Arabidopsis thaliana (Mouse-ear cress).